We begin with the raw amino-acid sequence, 179 residues long: ATP-dependent protease subunit HslV (179 aa).

Thr-7 is a catalytic residue. Residues Ala-163, Cys-166, and Thr-169 each contribute to the Na(+) site.

Belongs to the peptidase T1B family. HslV subfamily. As to quaternary structure, a double ring-shaped homohexamer of HslV is capped on each side by a ring-shaped HslU homohexamer. The assembly of the HslU/HslV complex is dependent on binding of ATP.

The protein localises to the cytoplasm. The catalysed reaction is ATP-dependent cleavage of peptide bonds with broad specificity.. With respect to regulation, allosterically activated by HslU binding. In terms of biological role, protease subunit of a proteasome-like degradation complex believed to be a general protein degrading machinery. This chain is ATP-dependent protease subunit HslV, found in Amoebophilus asiaticus (strain 5a2).